The sequence spans 233 residues: Glyceraldehyde-3-phosphate dehydrogenase A, chloroplastic (233 aa).

D-glyceraldehyde 3-phosphate contacts are provided by residues 49–51 (SCT), Thr-80, Arg-95, 108–109 (TG), and Arg-131. The active-site Nucleophile is Cys-50. An NADP(+)-binding site is contributed by Asn-213.

This sequence belongs to the glyceraldehyde-3-phosphate dehydrogenase family. In terms of assembly, tetramer of either four A chains (GAPDH 2) or two A and two B chains (GAPDH 1).

The protein localises to the plastid. It localises to the chloroplast. The enzyme catalyses D-glyceraldehyde 3-phosphate + phosphate + NADP(+) = (2R)-3-phospho-glyceroyl phosphate + NADPH + H(+). Its pathway is carbohydrate biosynthesis; Calvin cycle. This Sinapis alba (White mustard) protein is Glyceraldehyde-3-phosphate dehydrogenase A, chloroplastic (GAPA).